Here is a 108-residue protein sequence, read N- to C-terminus: Synaptobrevin-1 (108 aa).

Residues 1–25 (MDAQGDAGAQGGSQGPRPSNKRLQQ) form a disordered region. At 1-85 (MDAQGDAGAQ…KRKYWWKNIK (85 aa)) the chain is on the cytoplasmic side. The 61-residue stretch at 22–82 (RLQQTQAQVD…ATLKRKYWWK (61 aa)) folds into the v-SNARE coiled-coil homology domain. A helical; Anchor for type IV membrane protein transmembrane segment spans residues 86–106 (MMIIMCAIVVILIIIIVLWAG). Over 107–108 (GK) the chain is Extracellular.

The protein belongs to the synaptobrevin family. In terms of assembly, part of the SNARE core complex containing CBG09569/SNAP25, snb-1/VAMP2 and CBG03570/STX1A. This complex binds to cpx-1/CPLX1.

The protein localises to the cytoplasmic vesicle. Its subcellular location is the secretory vesicle. It localises to the synaptic vesicle membrane. It is found in the cell membrane. The protein resides in the synapse. The protein localises to the synaptosome. Functionally, involved in the targeting and/or fusion of transport vesicles to their target membrane. Acts in neuronal exocytosis of synaptic transmission. Likely to have a role in cholinergic transmisson. Required for viability, coordinated movement and M3 pharynx motor neuron function. The protein is Synaptobrevin-1 of Caenorhabditis briggsae.